Consider the following 210-residue polypeptide: Outer-membrane lipoprotein LolB (210 aa).

The signal sequence occupies residues M1–A19. C20 carries the N-palmitoyl cysteine lipid modification. Residue C20 is the site of S-diacylglycerol cysteine attachment.

This sequence belongs to the LolB family. Monomer.

It is found in the cell outer membrane. Its function is as follows. Plays a critical role in the incorporation of lipoproteins in the outer membrane after they are released by the LolA protein. The chain is Outer-membrane lipoprotein LolB from Mannheimia succiniciproducens (strain KCTC 0769BP / MBEL55E).